We begin with the raw amino-acid sequence, 204 residues long: Methylthioribulose-1-phosphate dehydratase (204 aa).

Zn(2+) contacts are provided by His94 and His96.

It belongs to the aldolase class II family. MtnB subfamily. The cofactor is Zn(2+).

The catalysed reaction is 5-(methylsulfanyl)-D-ribulose 1-phosphate = 5-methylsulfanyl-2,3-dioxopentyl phosphate + H2O. It functions in the pathway amino-acid biosynthesis; L-methionine biosynthesis via salvage pathway; L-methionine from S-methyl-5-thio-alpha-D-ribose 1-phosphate: step 2/6. Catalyzes the dehydration of methylthioribulose-1-phosphate (MTRu-1-P) into 2,3-diketo-5-methylthiopentyl-1-phosphate (DK-MTP-1-P). This chain is Methylthioribulose-1-phosphate dehydratase, found in Cronobacter sakazakii (strain ATCC BAA-894) (Enterobacter sakazakii).